A 708-amino-acid chain; its full sequence is MARKTPLKRYRNIGISAHIDAGKTTTTERVLFYTGVSHKIGEVHDGAATMDWMEQEQERGITITSAATTCFWSGMAKQFDEHRINIIDTPGHVDFTIEVERSMRVLDGACMVYCAVGGVQPQSETVWRQANKYKVPRLAFINKMDRVGADFYRVVEQIKTRLGGKPVPLVIPIGKEDDFEGVVDLITMKAIYWDEASQGMEYDEREIPAELQEKAEEYREYLVENAAEATEELMNEYLENGELTVDQINSAIRQLTINNEIIPLLCGTAFKNKGVQKMLDAVIQYLPAPMDVPAIKGILDDKDESEGTREASDEAPFSALAFKIMNDKFVGNLTFVRVYSGVLTQGSSVYNPVKMKRERVGRIVQMMANSQEELQEIRTGDIAALVGMKDVTTGDTLCDEQNVITLERMEFPDPVISLAVEPKTKADQEKMSIALGRLAKEDPSFRVHTDEESGQTIISGMGELHLEILVDRMKREFGVEANIGAPQVAYRETIRNTVEQEGKFVRQTGGRGKFGHVWLRLEPMDPAGDVLYEFKEEVVGGTVPKEFHGAVDKGIQERMKNGVLAGYPIVGVKATLYDGSYHDVDSDELSFKMAGSIAFRKGFMAANPTLLEPVMKVEVETPEDYMGDIMGDLSRRRGMVQGMEDLPGGTKQIRAEVPLAEMFGYATQMRSMSQGRATYSMEFQKYAEIPKSVAEAIISKFNNKDDDE.

The region spanning lysine 8–methionine 290 is the tr-type G domain. GTP-binding positions include alanine 17–threonine 24, aspartate 88–histidine 92, and asparagine 142–aspartate 145.

The protein belongs to the TRAFAC class translation factor GTPase superfamily. Classic translation factor GTPase family. EF-G/EF-2 subfamily.

Its subcellular location is the cytoplasm. Catalyzes the GTP-dependent ribosomal translocation step during translation elongation. During this step, the ribosome changes from the pre-translocational (PRE) to the post-translocational (POST) state as the newly formed A-site-bound peptidyl-tRNA and P-site-bound deacylated tRNA move to the P and E sites, respectively. Catalyzes the coordinated movement of the two tRNA molecules, the mRNA and conformational changes in the ribosome. The polypeptide is Elongation factor G (Psychrobacter arcticus (strain DSM 17307 / VKM B-2377 / 273-4)).